The primary structure comprises 263 residues: 2-dehydro-3-deoxyphosphooctonate aldolase (263 aa).

It belongs to the KdsA family.

It is found in the cytoplasm. It carries out the reaction D-arabinose 5-phosphate + phosphoenolpyruvate + H2O = 3-deoxy-alpha-D-manno-2-octulosonate-8-phosphate + phosphate. The protein operates within carbohydrate biosynthesis; 3-deoxy-D-manno-octulosonate biosynthesis; 3-deoxy-D-manno-octulosonate from D-ribulose 5-phosphate: step 2/3. It participates in bacterial outer membrane biogenesis; lipopolysaccharide biosynthesis. This Wolinella succinogenes (strain ATCC 29543 / DSM 1740 / CCUG 13145 / JCM 31913 / LMG 7466 / NCTC 11488 / FDC 602W) (Vibrio succinogenes) protein is 2-dehydro-3-deoxyphosphooctonate aldolase.